The primary structure comprises 442 residues: DMATS-type prenyltransferase mfmD (442 aa).

This sequence belongs to the tryptophan dimethylallyltransferase family.

The protein operates within secondary metabolite biosynthesis; terpenoid biosynthesis. Its function is as follows. Prenyltransferase; part of the gene cluster that mediates the biosynthesis of the phthalide-terpenoid hybrid 11'-O-desmethylfendlerol. Within the pathway, mfmD is responsible for farnesylation of the cyclopolic acid intermediate via an O-prenylation reaction. The biosynthesis of 11'-O-desmethylfendlerol begins with the NR-PKS mfmB that forms 3,5-dimethylorsellinic acid (DMOA), which is then transformed into the phthalide 5,7-dihydroxy-4-(hydroxymethyl)-6-methylphthalide by the cytochrome P450 monooxygenase mfmA and the hydrolase mfmC. Subsequently, the methyltransferase mfmE catalyzes 7-O-methylation to yield 5-hydroxy-4-(hydroxymethyl)-7-methoxy-6-methylphthalide, which undergoes C-3 hydroxylation by the cytochrome P450 monooxygenase mfmF. The resultant cyclopolic acid (2,5-dihydroxy-4-(hydroxymethyl)-7-methoxy-6-methylphthalide) is then farnesylated by the DMATS-type prenyltransferase mfmD to afford 5-O-farnesylcyclopolic acid. Finally, the Pyr4-family terpene cyclase mfmH cyclizes the farnesyl moiety of 5-O-farnesylcyclopolic acid into a drimane-like structure, thus completing the biosynthesis of 11'-O-desmethylfendlerol. The protein is DMATS-type prenyltransferase mfmD of Annulohypoxylon moriforme (Filamentous fungus).